Consider the following 121-residue polypeptide: Large ribosomal subunit protein uL18 (121 aa).

A compositionally biased stretch (basic residues) spans 1–19 (MASKKVQKIRDKRKARVRA). Positions 1–23 (MASKKVQKIRDKRKARVRAKISG) are disordered.

It belongs to the universal ribosomal protein uL18 family. As to quaternary structure, part of the 50S ribosomal subunit; part of the 5S rRNA/L5/L18/L25 subcomplex. Contacts the 5S and 23S rRNAs.

Functionally, this is one of the proteins that bind and probably mediate the attachment of the 5S RNA into the large ribosomal subunit, where it forms part of the central protuberance. This Syntrophus aciditrophicus (strain SB) protein is Large ribosomal subunit protein uL18.